Reading from the N-terminus, the 63-residue chain is MELRQQIPTGCIKQFGQFGVPYVVGEVAEFLPDGDVLVNITLLQSGEKDIYRLSHLLEDPEAE.

This is an uncharacterized protein from Haemophilus influenzae (strain ATCC 51907 / DSM 11121 / KW20 / Rd).